The primary structure comprises 581 residues: Arginine--tRNA ligase (581 aa).

The 'HIGH' region motif lies at 122 to 132 (PNVAKPMHVGH).

The protein belongs to the class-I aminoacyl-tRNA synthetase family. Monomer.

The protein resides in the cytoplasm. The enzyme catalyses tRNA(Arg) + L-arginine + ATP = L-arginyl-tRNA(Arg) + AMP + diphosphate. This Francisella tularensis subsp. novicida (strain U112) protein is Arginine--tRNA ligase.